Consider the following 156-residue polypeptide: Ribosomal RNA large subunit methyltransferase H (156 aa).

S-adenosyl-L-methionine-binding positions include leucine 73, glycine 104, and 123 to 128 (LSALTL).

The protein belongs to the RNA methyltransferase RlmH family. In terms of assembly, homodimer.

Its subcellular location is the cytoplasm. It catalyses the reaction pseudouridine(1915) in 23S rRNA + S-adenosyl-L-methionine = N(3)-methylpseudouridine(1915) in 23S rRNA + S-adenosyl-L-homocysteine + H(+). Specifically methylates the pseudouridine at position 1915 (m3Psi1915) in 23S rRNA. The sequence is that of Ribosomal RNA large subunit methyltransferase H from Shewanella sp. (strain ANA-3).